We begin with the raw amino-acid sequence, 340 residues long: NADH-quinone oxidoreductase subunit H 2 (340 aa).

Transmembrane regions (helical) follow at residues 10–30 (LIVA…ILLL), 84–104 (FLFK…FVAI), 126–146 (VALL…IFGG), 172–192 (MGFA…LDIV), 198–218 (VWNI…GLAE), 255–275 (VIVL…WNGI), 279–299 (MPPL…FIWF), and 318–338 (VLLP…GAAA).

Belongs to the complex I subunit 1 family. NDH-1 is composed of 14 different subunits. Subunits NuoA, H, J, K, L, M, N constitute the membrane sector of the complex.

It is found in the cell inner membrane. The catalysed reaction is a quinone + NADH + 5 H(+)(in) = a quinol + NAD(+) + 4 H(+)(out). NDH-1 shuttles electrons from NADH, via FMN and iron-sulfur (Fe-S) centers, to quinones in the respiratory chain. The immediate electron acceptor for the enzyme in this species is believed to be ubiquinone. Couples the redox reaction to proton translocation (for every two electrons transferred, four hydrogen ions are translocated across the cytoplasmic membrane), and thus conserves the redox energy in a proton gradient. This subunit may bind ubiquinone. The polypeptide is NADH-quinone oxidoreductase subunit H 2 (Rhizobium etli (strain ATCC 51251 / DSM 11541 / JCM 21823 / NBRC 15573 / CFN 42)).